Consider the following 503-residue polypeptide: von Willebrand factor A domain-containing protein 1 (503 aa).

An N-terminal signal peptide occupies residues 1–21 (MEVRKALTCVFLTVFLCSGDA). Residues 36–213 (DVLFLLDSSG…IIGEDLRNSI (178 aa)) form the VWFA domain. 2 consecutive Fibronectin type-III domains span residues 218–324 (RAER…TVNP) and 331–423 (LLSS…VLPA).

In terms of assembly, homodimer or homomultimer; disulfide-linked.

It localises to the secreted. The protein localises to the extracellular space. Its subcellular location is the extracellular matrix. It is found in the basement membrane. Its function is as follows. Promotes matrix assembly. Involved in the organization of skeletal muscles and in the formation of neuromuscular junctions. The protein is von Willebrand factor A domain-containing protein 1 of Danio rerio (Zebrafish).